The chain runs to 247 residues: PHD finger protein ALFIN-LIKE 3 (247 aa).

The tract at residues 147-178 (DRSGVDSSGKSKHSTKRTGEGQVKRSRVVAEE) is disordered. The PHD-type zinc-finger motif lies at 188 to 240 (ETFCGTCGGLYNANEFWIGCDICERWFHGKCVRITPAKAEHIKHYKCPDCSSS).

This sequence belongs to the Alfin family. Interacts with H3K4me3 and to a lesser extent with H3K4me2.

The protein resides in the nucleus. Its function is as follows. Histone-binding component that specifically recognizes H3 tails trimethylated on 'Lys-4' (H3K4me3), which mark transcription start sites of virtually all active genes. This is PHD finger protein ALFIN-LIKE 3 from Oryza sativa subsp. indica (Rice).